The primary structure comprises 237 residues: Speedy protein E4 (237 aa).

Positions 1–61 (MASGQARPPF…KRKSEWSDES (61 aa)) are disordered.

Belongs to the Speedy/Ringo family. Predominantly expressed in testis.

This chain is Speedy protein E4, found in Homo sapiens (Human).